We begin with the raw amino-acid sequence, 274 residues long: 2,3,4,5-tetrahydropyridine-2,6-dicarboxylate N-succinyltransferase (274 aa).

Substrate is bound by residues Arg-104 and Asp-141.

Belongs to the transferase hexapeptide repeat family. As to quaternary structure, homotrimer.

It localises to the cytoplasm. The catalysed reaction is (S)-2,3,4,5-tetrahydrodipicolinate + succinyl-CoA + H2O = (S)-2-succinylamino-6-oxoheptanedioate + CoA. It participates in amino-acid biosynthesis; L-lysine biosynthesis via DAP pathway; LL-2,6-diaminopimelate from (S)-tetrahydrodipicolinate (succinylase route): step 1/3. The protein is 2,3,4,5-tetrahydropyridine-2,6-dicarboxylate N-succinyltransferase of Shewanella oneidensis (strain ATCC 700550 / JCM 31522 / CIP 106686 / LMG 19005 / NCIMB 14063 / MR-1).